Reading from the N-terminus, the 628-residue chain is Alpha-L-arabinofuranosidase A (628 aa).

Residues 1 to 25 (MVAFSALSGVSAVSLLLSLVQNAHG) form the signal peptide. N36, N51, N74, N152, N171, N260, N359, N440, N493, and N610 each carry an N-linked (GlcNAc...) asparagine glycan.

Belongs to the glycosyl hydrolase 51 family.

The catalysed reaction is Hydrolysis of terminal non-reducing alpha-L-arabinofuranoside residues in alpha-L-arabinosides.. It participates in glycan metabolism; L-arabinan degradation. Acts only on small linear 1,5-alpha-linked L-arabinofuranosyl oligosaccharides. This is Alpha-L-arabinofuranosidase A (abfA) from Aspergillus niger.